A 686-amino-acid chain; its full sequence is MIQNPKRYTITAALPYTNGPIHIGHLAGVYMPSDIYSRYLRLQGKDVAFMCGSDEHGVAISMKAKKEGITPQEVIDKYDGIIRKSFVDFGISFDNYSRTSAKIHHDTASEFFKKLYDKGDFIEEVTEQLYDAKADQFLADRFVVGTCPKCGNEEAYGDQCEKCGSTLNATDLINPKSTITGETPIMKSTKHWFLPLDRYSDFLTKWILEGHKSDWKPNVYGQVKSWIDGGLEPRAVTRDLDWGIDVPVAGAEGKKLYVWFDAPIGYISATKEWAAREGKDWELYWKNEDTKLVHFIGKDNIVFHCIIFPAMLKAEGSYILPDNVPANEFLNLEGNKLSTSKNWAVWLHEYLEDFPNQQDVLRYALTANAPESKDNDFTWKDFQARNNNELAAIFGNFINRVVVLTNKYYEGVVPTPNKFSEVDEATLTELKAYPAVISSSIERYRFREALGELMNVARLGNKYLADEEPWKMVKTDPERVKTQMYVALQIATALRVLCEPFLPFTAEKLNKMLKIDAKLSWNDVTTNSDLILAGHKIGEGEILFAQIEDEQIQKQIDKLEATKTANIAENKKAEPQKELIQYDDFAKMDLRVGTIIEAEKMPKANKLLVLKVDTGIDVRTIVSGIAESFSPEEIIGKQVTVLVNLAPRALRGIESQGMILMTNLPDGKLAFVNPDVAGVGNGEGIN.

The 'HIGH' region motif lies at 15–25 (PYTNGPIHIGH). Residues cysteine 147, cysteine 150, cysteine 160, and cysteine 163 each coordinate Zn(2+). The short motif at 336 to 340 (KLSTS) is the 'KMSKS' region element. Threonine 339 lines the ATP pocket. Positions 584 to 686 (DFAKMDLRVG…AGVGNGEGIN (103 aa)) constitute a tRNA-binding domain.

It belongs to the class-I aminoacyl-tRNA synthetase family. MetG type 1 subfamily. As to quaternary structure, homodimer. It depends on Zn(2+) as a cofactor.

It is found in the cytoplasm. The catalysed reaction is tRNA(Met) + L-methionine + ATP = L-methionyl-tRNA(Met) + AMP + diphosphate. Its function is as follows. Is required not only for elongation of protein synthesis but also for the initiation of all mRNA translation through initiator tRNA(fMet) aminoacylation. This chain is Methionine--tRNA ligase, found in Flavobacterium psychrophilum (strain ATCC 49511 / DSM 21280 / CIP 103535 / JIP02/86).